Here is a 236-residue protein sequence, read N- to C-terminus: MEQMDAHQIISFIQNSKKATPVKVYLKGDLEKIDFPSDVKTFITGNAGTIFGEWAVVEPFLEANKANIEDYVIENDRRNSAIPLLDMKNINARIEPGAVIRDQVTIGDNAVIMMGASINIGSVIGDGTMIDMNVVLGGRATVGKNCHIGAGSVLAGVVEPPSAQPVVVEDNVVVGANVVVLEGVRIGEGAVVAAGAIVTKDVAPGTVVAGIPARELKKLDAKTASKTEIMQELRQL.

The protein belongs to the transferase hexapeptide repeat family. DapH subfamily.

It catalyses the reaction (S)-2,3,4,5-tetrahydrodipicolinate + acetyl-CoA + H2O = L-2-acetamido-6-oxoheptanedioate + CoA. It participates in amino-acid biosynthesis; L-lysine biosynthesis via DAP pathway; LL-2,6-diaminopimelate from (S)-tetrahydrodipicolinate (acetylase route): step 1/3. Functionally, catalyzes the transfer of an acetyl group from acetyl-CoA to tetrahydrodipicolinate. The protein is 2,3,4,5-tetrahydropyridine-2,6-dicarboxylate N-acetyltransferase of Listeria monocytogenes serotype 4b (strain CLIP80459).